The sequence spans 596 residues: MGKKSRVKTQKSGTGATAAVSPKEMMNLISELLQKCSSAAPSPGKEWEEYVQIRALVEKIRKKQKGMSVSFEGIREDFFSELMAWAAECRASCDGFEISNFADEGYGLKATKDIKAEELFLWIPRKMLMTVESAKNSVLGPLYSQDRILQAMGNVTLALHLLCERANPSSPWLPYIKTLPSEYDTPLYFEEEEVRHLLATQAIQDVLSQYKNTARQYAYFYKVIHTHPNASKLPLKDAFTFDDYRWAVSSVMTRQNQIPTADGSRVTLALIPLWDMCNHTNGLITTGYNLEDDRCECVALKDYKEGEQIYIFYGTRSNAEFVIHNGFFFEDNAHDRVKIKLGVSKGERLYAMKAEVLARAGIPASSIFALHCSEPPISAQLLAFLRVFCMTEEELRDYLVGDHAINKIFTLGNTEFPVSWENEIKLWTFLETRAALLLKTYKTASEEDRSMLEKPDLSLHSRIAIKLRLAEKEILEHAVSCGRAKRLHFQKQLDEGAPLPLYEESDIALLENADAKLPIILRKLEEEEEEHVEEMNQLTPDAVCMNSSKIPVLNGQCKDLNGTQEDPPGGGAVVKEIEKHDPSAKRTEGEPKDAGK.

S-adenosyl-L-methionine-binding positions include arginine 75, 104–106, arginine 254, 275–279, and 325–327; these read EGY, DMCNH, and NGF. The region spanning 94 to 314 is the SET domain; the sequence is DGFEISNFAD…EGEQIYIFYG (221 aa). Positions 556-596 are disordered; that stretch reads QCKDLNGTQEDPPGGGAVVKEIEKHDPSAKRTEGEPKDAGK. A compositionally biased stretch (basic and acidic residues) spans 575–596; that stretch reads KEIEKHDPSAKRTEGEPKDAGK.

The protein belongs to the class V-like SAM-binding methyltransferase superfamily. SETD3 actin-histidine methyltransferase family.

It is found in the cytoplasm. The enzyme catalyses L-histidyl-[protein] + S-adenosyl-L-methionine = N(tele)-methyl-L-histidyl-[protein] + S-adenosyl-L-homocysteine + H(+). Functionally, protein-histidine N-methyltransferase that specifically mediates 3-methylhistidine (tele-methylhistidine) methylation of actin at 'His-73'. Does not have protein-lysine N-methyltransferase activity and probably only catalyzes histidine methylation of actin. This Danio rerio (Zebrafish) protein is Actin-histidine N-methyltransferase.